The following is a 228-amino-acid chain: MSVYSLPPAPPSDEHQLFQRAQALSGFTLGELATRAQWVIPADLKRVKGWVGMLLEFYLGASAGSKPEQDFADIGIELKTIPISAQGKPLETTFVCVAPLTGNSGVTWENSHVRHKLARVLWVPVEGERHIPLAERRVGAPLLWSPNVEEEELLRRDWEELMDLIVLGKVESITARHGQVLQLRPKAANSRALTEAIGEFGQPIMTLPRGFYLKKTLTAPMLARHFLL.

Belongs to the MutH family.

The protein resides in the cytoplasm. Its function is as follows. Sequence-specific endonuclease that cleaves unmethylated GATC sequences. It is involved in DNA mismatch repair. The sequence is that of DNA mismatch repair protein MutH from Yersinia pseudotuberculosis serotype IB (strain PB1/+).